A 744-amino-acid polypeptide reads, in one-letter code: Putative pre-mRNA-splicing factor ATP-dependent RNA helicase DHX32 (744 aa).

An N-acetylmethionine modification is found at Met1. The interval 1-28 is disordered; that stretch reads MDEEELDHPNASPEKRYFPESLDSSDGD. Residues 72–270 form the Helicase ATP-binding domain; the sequence is MESLLQNQVV…RLIFEIHRSG (199 aa). 85–92 lines the ATP pocket; it reads GDSKCGKS. A DEAH box motif is present at residues 185 to 188; it reads DDVH. The Helicase C-terminal domain occupies 258 to 438; the sequence is SVIRLIFEIH…SMVLFMKRVD (181 aa).

This sequence belongs to the DEAD box helicase family. DEAH subfamily.

It is found in the nucleus. The protein localises to the mitochondrion. It carries out the reaction ATP + H2O = ADP + phosphate + H(+). The sequence is that of Putative pre-mRNA-splicing factor ATP-dependent RNA helicase DHX32 (Dhx32) from Mus musculus (Mouse).